We begin with the raw amino-acid sequence, 332 residues long: 2,3-diketo-L-gulonate reductase (332 aa).

Histidine 44 serves as the catalytic Proton donor. Residues isoleucine 168 to serine 174, tryptophan 224 to lysine 225, and glycine 304 to glutamate 306 each bind NAD(+).

The protein belongs to the LDH2/MDH2 oxidoreductase family. DlgD subfamily. In terms of assembly, homodimer.

Its subcellular location is the cytoplasm. The catalysed reaction is 3-dehydro-L-gulonate + NAD(+) = 2,3-dioxo-L-gulonate + NADH + H(+). It carries out the reaction 3-dehydro-L-gulonate + NADP(+) = 2,3-dioxo-L-gulonate + NADPH + H(+). Its function is as follows. Catalyzes the reduction of 2,3-diketo-L-gulonate in the presence of NADH, to form 3-keto-L-gulonate. The polypeptide is 2,3-diketo-L-gulonate reductase (Salmonella typhimurium (strain LT2 / SGSC1412 / ATCC 700720)).